Consider the following 335-residue polypeptide: Tetraacyldisaccharide 4'-kinase (335 aa).

Residue 62–69 coordinates ATP; that stretch reads NVGGTGKT.

Belongs to the LpxK family.

The catalysed reaction is a lipid A disaccharide + ATP = a lipid IVA + ADP + H(+). It functions in the pathway glycolipid biosynthesis; lipid IV(A) biosynthesis; lipid IV(A) from (3R)-3-hydroxytetradecanoyl-[acyl-carrier-protein] and UDP-N-acetyl-alpha-D-glucosamine: step 6/6. Its function is as follows. Transfers the gamma-phosphate of ATP to the 4'-position of a tetraacyldisaccharide 1-phosphate intermediate (termed DS-1-P) to form tetraacyldisaccharide 1,4'-bis-phosphate (lipid IVA). In Methylobacillus flagellatus (strain ATCC 51484 / DSM 6875 / VKM B-1610 / KT), this protein is Tetraacyldisaccharide 4'-kinase.